A 481-amino-acid chain; its full sequence is MAQPATPRTMAEKVWADHVVAHGTGEGAAREPDLIYIDLHLVHEVTSPQAFDGLRLANRPVRRPDLTIATEDHNVPTVDIDKPIADPVSRTQVETLRRNCAEFGIRLHPMGDAEQGIVHIIGPQLGLTQPGMTVVCGDSHTSTHGAFGALAMGIGTSEVEHVLATQTLPLRPFRTMAVNVDGELPPGVSAKDIILAVIAKIGTGGGQGHVIEYRGSAIESLSMEGRMTICNMSIEAGARAGMVAPDDTTFEFLRGRPHAPTGADWDAAVEAWRQLRTDPGAEFDTEVHLDAAELSPFVTWGTNPGQGVPLSGAVPDPELIVDEGERQAAEKALTYMGLQAGTAMRDVAVDTVFVGSCTNGRIEDLRVVADVLRGRRVADGIRMLVVPGSMRVRAQAESEGLDRIFIDAGAEWRQAGCSMCLGMNPDQLSPGQRCASTSNRNFEGRQGKGGRTHLVSPAVAAATAVRGTLSSPADLSAVPAR.

3 residues coordinate [4Fe-4S] cluster: cysteine 357, cysteine 417, and cysteine 420. A compositionally biased stretch (polar residues) spans 429–441 (SPGQRCASTSNRN). The tract at residues 429–451 (SPGQRCASTSNRNFEGRQGKGGR) is disordered.

It belongs to the aconitase/IPM isomerase family. LeuC type 1 subfamily. In terms of assembly, heterodimer of LeuC and LeuD. [4Fe-4S] cluster is required as a cofactor.

It catalyses the reaction (2R,3S)-3-isopropylmalate = (2S)-2-isopropylmalate. It participates in amino-acid biosynthesis; L-leucine biosynthesis; L-leucine from 3-methyl-2-oxobutanoate: step 2/4. Catalyzes the isomerization between 2-isopropylmalate and 3-isopropylmalate, via the formation of 2-isopropylmaleate. The chain is 3-isopropylmalate dehydratase large subunit from Mycobacterium sp. (strain JLS).